Here is a 421-residue protein sequence, read N- to C-terminus: O-acetyl-L-homoserine sulfhydrylase 1 (421 aa).

Lys206 is subject to N6-(pyridoxal phosphate)lysine.

This sequence belongs to the trans-sulfuration enzymes family. As to quaternary structure, homotetramer. Pyridoxal 5'-phosphate serves as cofactor.

The enzyme catalyses O-acetyl-L-homoserine + hydrogen sulfide = L-homocysteine + acetate. Its pathway is amino-acid biosynthesis; L-methionine biosynthesis via de novo pathway; L-homocysteine from O-acetyl-L-homoserine: step 1/1. With respect to regulation, inhibited by the carbonyl reagents hydroxylamine and phenylhydrazine. Also inhibited by methionine and propargylglycine. Functionally, catalyzes the conversion of O-acetyl-L-homoserine (OAH) into homocysteine in the methionine biosynthesis pathway. Has weak activity with O-acetyl-L-serine, O-phospho-L-serine, L-serine, O-succinyl-L-homoserine and L-homoserine. Shows low CTT beta-lyase activity and very low CTT gamma-synthase activity. This chain is O-acetyl-L-homoserine sulfhydrylase 1, found in Thermus thermophilus (strain ATCC 27634 / DSM 579 / HB8).